A 230-amino-acid chain; its full sequence is MCGNNMSTPLPAIVPAARKATAAVIFLHGLGDTGHGWAEAFAGIRSSHIKYICPHAPVRPVTLNMNVAMPSWFDIIGLSPDSQEDESGIKQAAENIKALIDQEVKNGIPSNRIILGGFSQGGALSLYTALTTQQKLAGVTALSCWLPLRASFPQGPIGGANRDISILQCHGDCDPLVPLMFGSLTVEKLKTLVNPANVTFKTYEGMMHSSCQQEMMDVKQFIDKLLPPID.

Residues Ser-119, Asp-174, and His-208 each act as charge relay system in the active site. Lys-224 is modified (N6-acetyllysine).

It belongs to the AB hydrolase superfamily. AB hydrolase 2 family. Homodimer. In terms of tissue distribution, platelets.

The protein resides in the cytoplasm. The protein localises to the cell membrane. Its subcellular location is the nucleus membrane. It localises to the endoplasmic reticulum. The catalysed reaction is S-hexadecanoyl-L-cysteinyl-[protein] + H2O = L-cysteinyl-[protein] + hexadecanoate + H(+). It carries out the reaction 1-hexadecanoyl-sn-glycero-3-phosphocholine + H2O = sn-glycerol 3-phosphocholine + hexadecanoate + H(+). The enzyme catalyses a 1-(9Z-octadecenoyl)-2-acyl-sn-glycero-3-phosphocholine + H2O = a 2-acyl-sn-glycero-3-phosphocholine + (9Z)-octadecenoate + H(+). Inhibited by palmostatin-B, leading to impair depalmitoylating of Ras. In terms of biological role, acts as an acyl-protein thioesterase. Hydrolyzes fatty acids from S-acylated cysteine residues in proteins such as trimeric G alpha proteins or HRAS. Acts as a palmitoyl thioesterase that catalyzes depalmitoylation of proteins, such as ADRB2, KCNMA1 and SQSTM1. Acts as a negative regulator of autophagy by mediating palmitoylation of SQSTM1, decreasing affinity between SQSTM1 and ATG8 proteins and recruitment of ubiquitinated cargo proteins to autophagosomes. Acts as a lysophospholipase and hydrolyzes lysophosphatidylcholine (lyso-PC). Also hydrolyzes lysophosphatidylethanolamine (lyso-PE), lysophosphatidylinositol (lyso-PI) and lysophosphatidylserine (lyso-PS). Has much higher thioesterase activity than lysophospholipase activity. Contributes to the production of lysophosphatidic acid (LPA) during blood coagulation by recognizing and cleaving plasma phospholipids to generate lysophospholipids which in turn act as substrates for ENPP2 to produce LPA. The chain is Acyl-protein thioesterase 1 (LYPLA1) from Homo sapiens (Human).